The chain runs to 272 residues: Tryptophan synthase alpha chain (272 aa).

Active-site proton acceptor residues include E49 and D60.

This sequence belongs to the TrpA family. Tetramer of two alpha and two beta chains.

The enzyme catalyses (1S,2R)-1-C-(indol-3-yl)glycerol 3-phosphate + L-serine = D-glyceraldehyde 3-phosphate + L-tryptophan + H2O. It functions in the pathway amino-acid biosynthesis; L-tryptophan biosynthesis; L-tryptophan from chorismate: step 5/5. The alpha subunit is responsible for the aldol cleavage of indoleglycerol phosphate to indole and glyceraldehyde 3-phosphate. This Methylibium petroleiphilum (strain ATCC BAA-1232 / LMG 22953 / PM1) protein is Tryptophan synthase alpha chain.